The chain runs to 185 residues: Tetrahydromethanopterin S-methyltransferase subunit A 2 (185 aa).

Residues methionine 1–aspartate 21 lie on the Cytoplasmic side of the membrane. Residues tyrosine 22–serine 38 form a helical membrane-spanning segment. Over histidine 39–threonine 185 the chain is Extracellular. Histidine 88 contacts 5-hydroxybenzimidazolylcob(I)amide.

This sequence belongs to the MtrA family. The complex is composed of 8 subunits; MtrA, MtrB, MtrC, MtrD, MtrE, MtrF, MtrG and MtrH. 5-hydroxybenzimidazolylcob(I)amide serves as cofactor.

It localises to the cell membrane. It carries out the reaction 5-methyl-5,6,7,8-tetrahydromethanopterin + coenzyme M + 2 Na(+)(in) = 5,6,7,8-tetrahydromethanopterin + methyl-coenzyme M + 2 Na(+)(out). It participates in one-carbon metabolism; methanogenesis from CO(2); methyl-coenzyme M from 5,10-methylene-5,6,7,8-tetrahydromethanopterin: step 2/2. Its function is as follows. Part of a complex that catalyzes the formation of methyl-coenzyme M and tetrahydromethanopterin from coenzyme M and methyl-tetrahydromethanopterin. This is an energy-conserving, sodium-ion translocating step. The chain is Tetrahydromethanopterin S-methyltransferase subunit A 2 from Methanothermobacter marburgensis (strain ATCC BAA-927 / DSM 2133 / JCM 14651 / NBRC 100331 / OCM 82 / Marburg) (Methanobacterium thermoautotrophicum).